We begin with the raw amino-acid sequence, 884 residues long: DNA replication licensing factor mcm2 (884 aa).

Positions 1 to 16 (MADSSESFNIATSPRT) are enriched in polar residues. 2 disordered regions span residues 1-61 (MADS…IGDA) and 120-151 (LYDS…EDEE). Residues 47-58 (PREEEEDGEELI) show a composition bias toward acidic residues. The C4-type zinc finger occupies 314–340 (CNKCNFILGPFFQSQNQEVKPGSCPEC). Positions 458–664 (IGERIFASIA…VQDEMLARFV (207 aa)) constitute an MCM domain. ADP is bound by residues S515 and Q516. The Arginine finger motif lies at 640–643 (SRFD).

The protein belongs to the MCM family. In terms of assembly, component of the mcm2-7 complex (RLF-M). The complex forms a toroidal hexameric ring with the proposed subunit order mcm2-mcm6-mcm4-mcm7-mcm3-mcm5. Component of the replisome complex. Component of the CMG helicase complex, composed of the mcm2-7 complex, the GINS complex and cdc45. Post-translationally, may be in a phosphorylated state in the mitotic mcm complex. Phosphorylated in the interphase mcm complex. Phosphorylated by the cdc7-dbf4 and cdc7-dbf4b complexes.

The protein resides in the nucleus. It is found in the chromosome. It carries out the reaction ATP + H2O = ADP + phosphate + H(+). Acts as a component of the MCM2-7 complex (MCM complex) which is the replicative helicase essential for 'once per cell cycle' DNA replication initiation and elongation in eukaryotic cells. Core component of CDC45-MCM-GINS (CMG) helicase, the molecular machine that unwinds template DNA during replication, and around which the replisome is built. The active ATPase sites in the MCM2-7 ring are formed through the interaction surfaces of two neighboring subunits such that a critical structure of a conserved arginine finger motif is provided in trans relative to the ATP-binding site of the Walker A box of the adjacent subunit. The six ATPase active sites, however, are likely to contribute differentially to the complex helicase activity. Required for the entry in S phase and for cell division. The sequence is that of DNA replication licensing factor mcm2 from Xenopus tropicalis (Western clawed frog).